We begin with the raw amino-acid sequence, 352 residues long: Putative F-box protein At5g14160 (352 aa).

The F-box domain maps to 14 to 60 (GVDWSELPEDVIRLVLRRLRLSDFHRARAVCSTWCRVWGDCVSKPNQ).

The sequence is that of Putative F-box protein At5g14160 from Arabidopsis thaliana (Mouse-ear cress).